Here is a 205-residue protein sequence, read N- to C-terminus: ATP-dependent Clp protease proteolytic subunit 2 (205 aa).

Catalysis depends on Ser100, which acts as the Nucleophile. The active site involves His125.

The protein belongs to the peptidase S14 family. In terms of assembly, fourteen ClpP subunits assemble into 2 heptameric rings which stack back to back to give a disk-like structure with a central cavity, resembling the structure of eukaryotic proteasomes.

It is found in the cytoplasm. The catalysed reaction is Hydrolysis of proteins to small peptides in the presence of ATP and magnesium. alpha-casein is the usual test substrate. In the absence of ATP, only oligopeptides shorter than five residues are hydrolyzed (such as succinyl-Leu-Tyr-|-NHMec, and Leu-Tyr-Leu-|-Tyr-Trp, in which cleavage of the -Tyr-|-Leu- and -Tyr-|-Trp bonds also occurs).. Cleaves peptides in various proteins in a process that requires ATP hydrolysis. Has a chymotrypsin-like activity. Plays a major role in the degradation of misfolded proteins. In Chlamydia abortus (strain DSM 27085 / S26/3) (Chlamydophila abortus), this protein is ATP-dependent Clp protease proteolytic subunit 2.